We begin with the raw amino-acid sequence, 402 residues long: Exodeoxyribonuclease 7 large subunit (402 aa).

This sequence belongs to the XseA family. In terms of assembly, heterooligomer composed of large and small subunits.

It is found in the cytoplasm. It catalyses the reaction Exonucleolytic cleavage in either 5'- to 3'- or 3'- to 5'-direction to yield nucleoside 5'-phosphates.. Functionally, bidirectionally degrades single-stranded DNA into large acid-insoluble oligonucleotides, which are then degraded further into small acid-soluble oligonucleotides. This is Exodeoxyribonuclease 7 large subunit from Moorella thermoacetica (strain ATCC 39073 / JCM 9320).